Consider the following 824-residue polypeptide: Glycogen phosphorylase (824 aa).

Lys667 carries the post-translational modification N6-(pyridoxal phosphate)lysine.

This sequence belongs to the glycogen phosphorylase family. Requires pyridoxal 5'-phosphate as cofactor.

It carries out the reaction [(1-&gt;4)-alpha-D-glucosyl](n) + phosphate = [(1-&gt;4)-alpha-D-glucosyl](n-1) + alpha-D-glucose 1-phosphate. Phosphorylase is an important allosteric enzyme in carbohydrate metabolism. Enzymes from different sources differ in their regulatory mechanisms and in their natural substrates. However, all known phosphorylases share catalytic and structural properties. The chain is Glycogen phosphorylase (glgP) from Chlamydia pneumoniae (Chlamydophila pneumoniae).